Reading from the N-terminus, the 711-residue chain is Probable cadmium-transporting ATPase (711 aa).

In terms of domain architecture, HMA spans 3–66; sequence EKTVYRVDGL…AGAFEHLKII (64 aa). Positions 14 and 17 each coordinate Cd(2+). The next 5 helical transmembrane spans lie at 89 to 109, 111 to 131, 151 to 171, 317 to 337, and 347 to 367; these read WRLLLSGLFIAVGYASQIMNG, DFYLTNALFIFAIFIGGYSLF, IAIIGAAFIGEWAEGSIVVIL, TPAIIVIAALIATVPPLLFGG, and LSVLVVGCPCALVVSTPVAIV. Residue Asp-398 is the 4-aspartylphosphate intermediate of the active site. Residues 669-689 form a helical membrane-spanning segment; the sequence is VIKLIALLLVIPGWLTLWIAI.

This sequence belongs to the cation transport ATPase (P-type) (TC 3.A.3) family. Type IB subfamily.

It localises to the cell membrane. It carries out the reaction Cd(2+)(in) + ATP + H2O = Cd(2+)(out) + ADP + phosphate + H(+). Functionally, couples the hydrolysis of ATP with the export of cadmium. The polypeptide is Probable cadmium-transporting ATPase (cadA) (Listeria monocytogenes).